Consider the following 199-residue polypeptide: Small ribosomal subunit protein uS7 (199 aa).

Belongs to the universal ribosomal protein uS7 family. As to quaternary structure, part of the 30S ribosomal subunit.

Functionally, one of the primary rRNA binding proteins, it binds directly to 16S rRNA where it nucleates assembly of the head domain of the 30S subunit. Is located at the subunit interface close to the decoding center. The sequence is that of Small ribosomal subunit protein uS7 from Cenarchaeum symbiosum (strain A).